Here is a 252-residue protein sequence, read N- to C-terminus: Carbonic anhydrase (252 aa).

Positions Met-1–Ala-26 are cleaved as a signal peptide. Residues Thr-31–Glu-252 enclose the Alpha-carbonic anhydrase domain. Cys-54 and Cys-207 are oxidised to a cystine. His-92 functions as the Proton acceptor in the catalytic mechanism. Residues His-118, His-120, and His-137 each contribute to the Zn(2+) site. Thr-203–Thr-204 contacts substrate.

The protein belongs to the alpha-carbonic anhydrase family. As to quaternary structure, homodimer. Zn(2+) serves as cofactor.

The protein resides in the periplasm. It carries out the reaction hydrogencarbonate + H(+) = CO2 + H2O. In terms of biological role, reversible hydration of carbon dioxide. In Neisseria gonorrhoeae, this protein is Carbonic anhydrase (cah).